Consider the following 791-residue polypeptide: uncharacterized protein (791 aa).

4 helical membrane-spanning segments follow: residues 104–124 (MWILAFGLATVIAGVDAFFLM), 131–151 (IAAIVALLVAYPLGQLWYYII), 177–197 (ACLYIFVNICVSAKLVNTLII), and 226–246 (WSGLALPILVYPPTLIWPSVL). N-linked (GlcNAc...) asparagine glycosylation is present at N265. The next 8 membrane-spanning stretches (helical) occupy residues 274–294 (FFIVFVASFIWYWFPDLIFPA), 309–329 (SAVLSQIFGVKTGLGLFPLTL), 346–366 (WATCCIFTSFVFWIWIVLPGL), 421–441 (FIINIALSLGAFSSMMISFFL), 471–491 (VHWGFYLASIIVSLGLGFAFT), 501–521 (SYGFVVSMVIGAALYIPLSLI), 533–553 (AFFEIVAAFWFNGQPMALLYF), and 583–603 (LVAALLFTSGIWSSLVNSAVT). N-linked (GlcNAc...) asparagine glycosylation is present at N621. 3 helical membrane passes run 653 to 673 (FVMWFFLVGAVVSVVVYLLQI), 697 to 717 (SVTGINYSTWAAVAFCFNYLI), and 733 to 753 (AAAMDCGVAIAGLFIYFCVVY). N759 carries an N-linked (GlcNAc...) asparagine glycan.

This sequence belongs to the oligopeptide OPT transporter family.

The protein localises to the membrane. This is an uncharacterized protein from Schizosaccharomyces pombe (strain 972 / ATCC 24843) (Fission yeast).